A 373-amino-acid chain; its full sequence is Probable dual-specificity RNA methyltransferase RlmN (373 aa).

The active-site Proton acceptor is the E111. Residues 117-356 (GPGRLTACLS…LRKSYGTSIH (240 aa)) enclose the Radical SAM core domain. An intrachain disulfide couples C124 to C359. 3 residues coordinate [4Fe-4S] cluster: C131, C135, and C138. S-adenosyl-L-methionine-binding positions include 183–184 (GE), S216, 239–241 (SLH), and N316. C359 functions as the S-methylcysteine intermediate in the catalytic mechanism.

This sequence belongs to the radical SAM superfamily. RlmN family. It depends on [4Fe-4S] cluster as a cofactor.

The protein resides in the cytoplasm. It catalyses the reaction adenosine(2503) in 23S rRNA + 2 reduced [2Fe-2S]-[ferredoxin] + 2 S-adenosyl-L-methionine = 2-methyladenosine(2503) in 23S rRNA + 5'-deoxyadenosine + L-methionine + 2 oxidized [2Fe-2S]-[ferredoxin] + S-adenosyl-L-homocysteine. The enzyme catalyses adenosine(37) in tRNA + 2 reduced [2Fe-2S]-[ferredoxin] + 2 S-adenosyl-L-methionine = 2-methyladenosine(37) in tRNA + 5'-deoxyadenosine + L-methionine + 2 oxidized [2Fe-2S]-[ferredoxin] + S-adenosyl-L-homocysteine. In terms of biological role, specifically methylates position 2 of adenine 2503 in 23S rRNA and position 2 of adenine 37 in tRNAs. The polypeptide is Probable dual-specificity RNA methyltransferase RlmN (Chlorobium phaeovibrioides (strain DSM 265 / 1930) (Prosthecochloris vibrioformis (strain DSM 265))).